A 211-amino-acid chain; its full sequence is Endonuclease III (211 aa).

The region spanning 108–127 is the HhH domain; sequence REALEALAGVGRKTANVVLN. Cys187, Cys194, Cys197, and Cys203 together coordinate [4Fe-4S] cluster.

It belongs to the Nth/MutY family. [4Fe-4S] cluster serves as cofactor.

The catalysed reaction is 2'-deoxyribonucleotide-(2'-deoxyribose 5'-phosphate)-2'-deoxyribonucleotide-DNA = a 3'-end 2'-deoxyribonucleotide-(2,3-dehydro-2,3-deoxyribose 5'-phosphate)-DNA + a 5'-end 5'-phospho-2'-deoxyribonucleoside-DNA + H(+). In terms of biological role, DNA repair enzyme that has both DNA N-glycosylase activity and AP-lyase activity. The DNA N-glycosylase activity releases various damaged pyrimidines from DNA by cleaving the N-glycosidic bond, leaving an AP (apurinic/apyrimidinic) site. The AP-lyase activity cleaves the phosphodiester bond 3' to the AP site by a beta-elimination, leaving a 3'-terminal unsaturated sugar and a product with a terminal 5'-phosphate. The sequence is that of Endonuclease III from Haemophilus influenzae (strain ATCC 51907 / DSM 11121 / KW20 / Rd).